The following is a 471-amino-acid chain: MEILCEDNISLSSIPNSLMQLGDGPRLYHNDFNSRDANTSEASNWTIDAENRTNLSCEGYLPPTCLSILHLQEKNWSALLTTVVIILTIAGNILVIMAVSLEKKLQNATNYFLMSLAIADMLLGFLVMPVSMLTILYGYRWPLPSKLCAIWIYLDVLFSTASIMHLCAISLDRYVAIQNPIHHSRFNSRTKAFLKIIAVWTISVGISMPIPVFGLQDDSKVFKEGSCLLADDNFVLIGSFVAFFIPLTIMVITYFLTIKSLQKEATLCVSDLSTRAKLASFSFLPQSSLSSEKLFQRSIHREPGSYAGRRTMQSISNEQKACKVLGIVFFLFVVMWCPFFITNIMAVICKESCNENVIGALLNVFVWIGYLSSAVNPLVYTLFNKTYRSAFSRYIQCQYKENRKPLQLILVNTIPALAYKSSQLQVGQKKNSQEDAEQTVDDCSMVTLGKQQSEENCTDNIETVNEKVSCV.

The Extracellular segment spans residues 1-80; that stretch reads MEILCEDNIS…LQEKNWSALL (80 aa). Residues Asn8, Asn38, Asn44, Asn51, and Asn54 are each glycosylated (N-linked (GlcNAc...) asparagine). Residues 81–97 form a helical membrane-spanning segment; it reads TTVVIILTIAGNILVIM. At 98-111 the chain is on the cytoplasmic side; that stretch reads AVSLEKKLQNATNY. Residues 112–137 form a helical membrane-spanning segment; the sequence is FLMSLAIADMLLGFLVMPVSMLTILY. Topologically, residues 138–146 are extracellular; that stretch reads GYRWPLPSK. A helical transmembrane segment spans residues 147-171; sequence LCAIWIYLDVLFSTASIMHLCAISL. A disulfide bond links Cys148 and Cys227. A serotonin-binding site is contributed by Asp155. The short motif at 172–174 is the DRY motif; important for ligand-induced conformation changes element; it reads DRY. Over 172 to 191 the chain is Cytoplasmic; that stretch reads DRYVAIQNPIHHSRFNSRTK. A helical transmembrane segment spans residues 192–215; that stretch reads AFLKIIAVWTISVGISMPIPVFGL. Residues 216–232 lie on the Extracellular side of the membrane; that stretch reads QDDSKVFKEGSCLLADD. The chain crosses the membrane as a helical span at residues 233–258; it reads NFVLIGSFVAFFIPLTIMVITYFLTI. The Cytoplasmic segment spans residues 259 to 322; the sequence is KSLQKEATLC…QSISNEQKAC (64 aa). The residue at position 280 (Ser280) is a Phosphoserine. The chain crosses the membrane as a helical span at residues 323-348; it reads KVLGIVFFLFVVMWCPFFITNIMAVI. Asn343 provides a ligand contact to serotonin. The cysteines at positions 349 and 353 are disulfide-linked. Topologically, residues 349-356 are extracellular; the sequence is CKESCNEN. The helical transmembrane segment at 357-382 threads the bilayer; it reads VIGALLNVFVWIGYLSSAVNPLVYTL. Residues 376–380 carry the NPxxY motif; important for ligand-induced conformation changes and signaling motif; it reads NPLVY. Residues 383–471 are Cytoplasmic-facing; that stretch reads FNKTYRSAFS…ETVNEKVSCV (89 aa). The short motif at 469–471 is the PDZ-binding element; the sequence is SCV.

The protein belongs to the G-protein coupled receptor 1 family. Interacts (via C-terminus) with MPDZ and PATJ. May interact (via C-terminus) with MPP3, PRDX6, DLG4, DLG1, CASK, APBA1 and MAGI2. Interacts with GRM2 and DRD2; this may affect signaling. Detected in adult intestine, especially in mucosal epithelium, longitudinal and circular layers of muscularis externa and myenteric plexuses. Highly expressed in Paneth cells, and detected at lower levels in enterocytes (at protein level). Detected in brain cortex.

Its subcellular location is the cell membrane. The protein localises to the cell projection. It is found in the axon. The protein resides in the cytoplasmic vesicle. It localises to the membrane. Its subcellular location is the caveola. The protein localises to the dendrite. It is found in the presynapse. G-protein coupled receptor activity is regulated by lipids: oleamide increases HTR2A-mediated activity. Its function is as follows. G-protein coupled receptor for 5-hydroxytryptamine (serotonin). Also functions as a receptor for various drugs and psychoactive substances, including mescaline, psilocybin, 1-(2,5-dimethoxy-4-iodophenyl)-2-aminopropane (DOI) and lysergic acid diethylamide (LSD). Ligand binding causes a conformation change that triggers signaling via guanine nucleotide-binding proteins (G proteins) and modulates the activity of downstream effectors. HTR2A is coupled to G(q)/G(11) G alpha proteins and activates phospholipase C-beta, releasing diacylglycerol (DAG) and inositol 1,4,5-trisphosphate (IP3) second messengers that modulate the activity of phosphatidylinositol 3-kinase and promote the release of Ca(2+) ions from intracellular stores, respectively. Beta-arrestin family members inhibit signaling via G proteins and mediate activation of alternative signaling pathways. Affects neural activity, perception, cognition and mood. Plays a role in the regulation of behavior, including responses to anxiogenic situations and psychoactive substances. Plays a role in intestinal smooth muscle contraction, and may play a role in arterial vasoconstriction. The chain is 5-hydroxytryptamine receptor 2A (Htr2a) from Rattus norvegicus (Rat).